The primary structure comprises 161 residues: Eukaryotic translation initiation factor 5A-1 (161 aa).

Residues 1-12 (MSDEEHQFESKA) are compositionally biased toward basic and acidic residues. The disordered stretch occupies residues 1–21 (MSDEEHQFESKADAGASKTYP). Lys52 is subject to Hypusine.

The protein belongs to the eIF-5A family. Lys-52 undergoes hypusination, a unique post-translational modification that consists in the addition of a butylamino group from spermidine to lysine side chain, leading to the formation of the unusual amino acid hypusine. eIF-5As are the only known proteins to undergo this modification, which is essential for their function.

Translation factor that promotes translation elongation and termination, particularly upon ribosome stalling at specific amino acid sequence contexts. Binds between the exit (E) and peptidyl (P) site of the ribosome and promotes rescue of stalled ribosome: specifically required for efficient translation of polyproline-containing peptides as well as other motifs that stall the ribosome. Acts as a ribosome quality control (RQC) cofactor by joining the RQC complex to facilitate peptidyl transfer during CAT tailing step. The chain is Eukaryotic translation initiation factor 5A-1 from Medicago sativa (Alfalfa).